Consider the following 631-residue polypeptide: Chaperone protein DnaK (631 aa).

The residue at position 198 (Thr198) is a Phosphothreonine; by autocatalysis. The interval 602 to 631 (EAAGGAQQAGKDDVVDAEFTEVDDDKKKSA) is disordered.

This sequence belongs to the heat shock protein 70 family.

Functionally, acts as a chaperone. In Rhodopseudomonas palustris (strain ATCC BAA-98 / CGA009), this protein is Chaperone protein DnaK.